A 271-amino-acid chain; its full sequence is Pyrroline-5-carboxylate reductase (271 aa).

Belongs to the pyrroline-5-carboxylate reductase family.

Its subcellular location is the cytoplasm. It catalyses the reaction L-proline + NADP(+) = (S)-1-pyrroline-5-carboxylate + NADPH + 2 H(+). It carries out the reaction L-proline + NAD(+) = (S)-1-pyrroline-5-carboxylate + NADH + 2 H(+). It functions in the pathway amino-acid biosynthesis; L-proline biosynthesis; L-proline from L-glutamate 5-semialdehyde: step 1/1. Catalyzes the reduction of 1-pyrroline-5-carboxylate (PCA) to L-proline. This chain is Pyrroline-5-carboxylate reductase, found in Staphylococcus epidermidis (strain ATCC 35984 / DSM 28319 / BCRC 17069 / CCUG 31568 / BM 3577 / RP62A).